A 399-amino-acid polypeptide reads, in one-letter code: 4-hydroxy-3-methylbut-2-enyl diphosphate reductase (399 aa).

Residue Cys-66 participates in [4Fe-4S] cluster binding. His-96 provides a ligand contact to (2E)-4-hydroxy-3-methylbut-2-enyl diphosphate. His-96 is a dimethylallyl diphosphate binding site. His-96 is an isopentenyl diphosphate binding site. Cys-157 is a binding site for [4Fe-4S] cluster. Residue His-185 coordinates (2E)-4-hydroxy-3-methylbut-2-enyl diphosphate. His-185 contacts dimethylallyl diphosphate. His-185 contacts isopentenyl diphosphate. The Proton donor role is filled by Glu-187. Thr-250 provides a ligand contact to (2E)-4-hydroxy-3-methylbut-2-enyl diphosphate. Residue Cys-288 participates in [4Fe-4S] cluster binding. Ser-317, Ser-318, Asn-319, and Ser-379 together coordinate (2E)-4-hydroxy-3-methylbut-2-enyl diphosphate. The dimethylallyl diphosphate site is built by Ser-317, Ser-318, Asn-319, and Ser-379. Ser-317, Ser-318, Asn-319, and Ser-379 together coordinate isopentenyl diphosphate.

Belongs to the IspH family. [4Fe-4S] cluster serves as cofactor.

The enzyme catalyses isopentenyl diphosphate + 2 oxidized [2Fe-2S]-[ferredoxin] + H2O = (2E)-4-hydroxy-3-methylbut-2-enyl diphosphate + 2 reduced [2Fe-2S]-[ferredoxin] + 2 H(+). It catalyses the reaction dimethylallyl diphosphate + 2 oxidized [2Fe-2S]-[ferredoxin] + H2O = (2E)-4-hydroxy-3-methylbut-2-enyl diphosphate + 2 reduced [2Fe-2S]-[ferredoxin] + 2 H(+). Its pathway is isoprenoid biosynthesis; dimethylallyl diphosphate biosynthesis; dimethylallyl diphosphate from (2E)-4-hydroxy-3-methylbutenyl diphosphate: step 1/1. It functions in the pathway isoprenoid biosynthesis; isopentenyl diphosphate biosynthesis via DXP pathway; isopentenyl diphosphate from 1-deoxy-D-xylulose 5-phosphate: step 6/6. Catalyzes the conversion of 1-hydroxy-2-methyl-2-(E)-butenyl 4-diphosphate (HMBPP) into a mixture of isopentenyl diphosphate (IPP) and dimethylallyl diphosphate (DMAPP). Acts in the terminal step of the DOXP/MEP pathway for isoprenoid precursor biosynthesis. This is 4-hydroxy-3-methylbut-2-enyl diphosphate reductase from Synechococcus sp. (strain WH7803).